Consider the following 98-residue polypeptide: Co-chaperonin GroES (98 aa).

Belongs to the GroES chaperonin family. In terms of assembly, heptamer of 7 subunits arranged in a ring. Interacts with the chaperonin GroEL.

Its subcellular location is the cytoplasm. In terms of biological role, together with the chaperonin GroEL, plays an essential role in assisting protein folding. The GroEL-GroES system forms a nano-cage that allows encapsulation of the non-native substrate proteins and provides a physical environment optimized to promote and accelerate protein folding. GroES binds to the apical surface of the GroEL ring, thereby capping the opening of the GroEL channel. The polypeptide is Co-chaperonin GroES (Clavibacter michiganensis subsp. michiganensis (strain NCPPB 382)).